We begin with the raw amino-acid sequence, 385 residues long: Cytochrome b (385 aa).

The Mitochondrial matrix segment spans residues 1-27 (MAFRKSNVYLSLVNSYIIDSPQPSSIN). Tyrosine 16 lines the a ubiquinone pocket. The chain crosses the membrane as a helical span at residues 28–51 (YWWNMGSLLGLCLVIQIVTGIFMA). Over 52–74 (MHYSSNIELAFSSVEHIMRDVHN) the chain is Mitochondrial intermembrane. A helical membrane pass occupies residues 75-102 (GYILRYLHANGASFFFMVMFMHMAKGLY). The heme b site is built by histidine 82 and histidine 96. Topologically, residues 103–110 (YGSYRSPR) are mitochondrial matrix. Residues 111–135 (VTLWNVGVIIFILTIATAFLGYCCV) form a helical membrane-spanning segment. At 136-172 (YGQMSHWGATVITNLFSAIPFVGNDIVSWLWGGFSVS) the chain is on the mitochondrial intermembrane side. Residues 173 to 204 (NPTIQRFFALHYLVPFIIAAMVIMHLMALHIH) form a helical membrane-spanning segment. Heme b is bound by residues histidine 183 and histidine 197. Histidine 202 provides a ligand contact to a ubiquinone. Over 205 to 223 (GSSNPLGITGNLDRIPMHS) the chain is Mitochondrial matrix. The chain crosses the membrane as a helical span at residues 224–246 (YFIFKDLVTVFLFMLILALFVFY). Residues 247 to 287 (SPNTLGHPDNYIPGNPLVTPASIVPEWYLLPFYAILRSIPD) are Mitochondrial intermembrane-facing. Residues 288 to 308 (KLLGVITMFAAILVLLVLPFT) traverse the membrane as a helical segment. Over 309–319 (DRSVVRGNTFK) the chain is Mitochondrial matrix. The helical transmembrane segment at 320–340 (VLSKFFFFIFVFNFVLLGQIG) threads the bilayer. The Mitochondrial intermembrane segment spans residues 341–347 (ACHVEVP). Residues 348-364 (YVLMGQIATFIYFAYFL) form a helical membrane-spanning segment. At 365 to 385 (IIVPVISTIENVLFYIGRVNK) the chain is on the mitochondrial matrix side.

It belongs to the cytochrome b family. In terms of assembly, component of the ubiquinol-cytochrome c oxidoreductase (cytochrome b-c1 complex, complex III, CIII), a multisubunit enzyme composed of 10 subunits. The complex is composed of 3 respiratory subunits cytochrome b (COB), cytochrome c1 (CYT1) and Rieske protein (RIP1), 2 core protein subunits COR1 and QCR2, and 5 low-molecular weight protein subunits QCR6, QCR7, QCR8, QCR9 and QCR10. The complex exists as an obligatory dimer and forms supercomplexes (SCs) in the inner mitochondrial membrane with a monomer or a dimer of cytochrome c oxidase (complex IV, CIV), resulting in 2 different assemblies (supercomplexes III(2)IV and III(2)IV(2)). Requires heme b as cofactor.

The protein localises to the mitochondrion inner membrane. It carries out the reaction a quinol + 2 Fe(III)-[cytochrome c](out) = a quinone + 2 Fe(II)-[cytochrome c](out) + 2 H(+)(out). Functionally, component of the ubiquinol-cytochrome c oxidoreductase, a multisubunit transmembrane complex that is part of the mitochondrial electron transport chain which drives oxidative phosphorylation. The respiratory chain contains 3 multisubunit complexes succinate dehydrogenase (complex II, CII), ubiquinol-cytochrome c oxidoreductase (cytochrome b-c1 complex, complex III, CIII) and cytochrome c oxidase (complex IV, CIV), that cooperate to transfer electrons derived from NADH and succinate to molecular oxygen, creating an electrochemical gradient over the inner membrane that drives transmembrane transport and the ATP synthase. The cytochrome b-c1 complex catalyzes electron transfer from ubiquinol to cytochrome c, linking this redox reaction to translocation of protons across the mitochondrial inner membrane, with protons being carried across the membrane as hydrogens on the quinol. In the process called Q cycle, 2 protons are consumed from the matrix, 4 protons are released into the intermembrane space and 2 electrons are passed to cytochrome c. Cytochrome b is a catalytic core subunit containing 2 b-type hemes BL and BH topographically segregated in the quinone reduction (Qi) and quinol oxidation (Q0) sites on opposite sides of the membrane. The protein is Cytochrome b (COB) of Saccharomyces cerevisiae (strain ATCC 204508 / S288c) (Baker's yeast).